A 274-amino-acid polypeptide reads, in one-letter code: Thiamine kinase (274 aa).

Belongs to the thiamine kinase family.

The enzyme catalyses thiamine + ATP = thiamine phosphate + ADP + H(+). Its pathway is cofactor biosynthesis; thiamine diphosphate biosynthesis; thiamine phosphate from thiamine: step 1/1. Catalyzes the ATP-dependent phosphorylation of thiamine to thiamine phosphate. Is involved in thiamine salvage. The protein is Thiamine kinase of Shigella dysenteriae serotype 1 (strain Sd197).